A 331-amino-acid chain; its full sequence is D-alanine--D-alanine ligase (331 aa).

One can recognise an ATP-grasp domain in the interval 112–314; sequence KRIWRSEGLP…YEDLCLRLLA (203 aa). Position 138–193 (138–193) interacts with ATP; that stretch reads LQTLGAPMIVKPAREGSTIGLSKVHQAQQCASAYLLAARYDPEVLCEQFIAGDELT. D267, E281, and N283 together coordinate Mg(2+).

Belongs to the D-alanine--D-alanine ligase family. It depends on Mg(2+) as a cofactor. The cofactor is Mn(2+).

The protein resides in the cytoplasm. It carries out the reaction 2 D-alanine + ATP = D-alanyl-D-alanine + ADP + phosphate + H(+). The protein operates within cell wall biogenesis; peptidoglycan biosynthesis. Cell wall formation. This chain is D-alanine--D-alanine ligase, found in Verminephrobacter eiseniae (strain EF01-2).